The following is a 235-amino-acid chain: Small ribosomal subunit protein uS2c (235 aa).

The protein belongs to the universal ribosomal protein uS2 family.

It localises to the plastid. The protein is Small ribosomal subunit protein uS2c (rps2) of Euglena longa (Euglenophycean alga).